Consider the following 101-residue polypeptide: Parathymosin (101 aa).

The segment at 1–101 (MSEKSVEAAA…RQKTENGASA (101 aa)) is disordered. S2 carries the post-translational modification N-acetylserine. The residue at position 2 (S2) is a Phosphoserine. The residue at position 4 (K4) is an N6-acetyllysine. S5 and S13 each carry phosphoserine. Residues 13–37 (SAKDLKEKKDKVEEKAGRKERKKEV) show a composition bias toward basic and acidic residues. An N6-acetyllysine modification is found at K15. Positions 38–74 (VEEEENGAEEEEEETAEDGEDDDEGDEEDEEEEEEDE) are enriched in acidic residues. T52 carries the phosphothreonine modification. K91 is modified (N6-acetyllysine).

The protein belongs to the pro/parathymosin family.

In terms of biological role, parathymosin may mediate immune function by blocking the effect of prothymosin alpha which confers resistance to certain opportunistic infections. The polypeptide is Parathymosin (Ptms) (Mus musculus (Mouse)).